A 71-amino-acid chain; its full sequence is Sec-independent protein translocase protein TatA (71 aa).

The helical transmembrane segment at 1–21 (MGSFSIWHWLIVLVVVLLLFG) threads the bilayer. Residues 47–71 (AEEAKTVEHRTDEPVGEVKQKASKS) form a disordered region. Residues 49–71 (EAKTVEHRTDEPVGEVKQKASKS) are compositionally biased toward basic and acidic residues.

The protein belongs to the TatA/E family. As to quaternary structure, the Tat system comprises two distinct complexes: a TatABC complex, containing multiple copies of TatA, TatB and TatC subunits, and a separate TatA complex, containing only TatA subunits. Substrates initially bind to the TatABC complex, which probably triggers association of the separate TatA complex to form the active translocon.

It localises to the cell inner membrane. Part of the twin-arginine translocation (Tat) system that transports large folded proteins containing a characteristic twin-arginine motif in their signal peptide across membranes. TatA could form the protein-conducting channel of the Tat system. This Chelativorans sp. (strain BNC1) protein is Sec-independent protein translocase protein TatA.